Here is a 670-residue protein sequence, read N- to C-terminus: Probable plastid-lipid-associated protein 14, chloroplastic (670 aa).

A chloroplast-targeting transit peptide spans 1-52 (MALCGVCSTPNLPNLQVFRSVRNSSIGYKRNHSLWQLRSSSFRAKSVIFHCS). The Protein kinase domain maps to 88 to 399 (FRILDRVSIG…CLDALKHPFL (312 aa)).

Belongs to the PAP/fibrillin family. Post-translationally, not autophosphorylated. Expressed in roots.

The protein resides in the plastid. Its subcellular location is the chloroplast. Functionally, directly regulated by DOF3.6/OBP3; unknown function. This Arabidopsis thaliana (Mouse-ear cress) protein is Probable plastid-lipid-associated protein 14, chloroplastic (PAP14).